A 116-amino-acid chain; its full sequence is G antigen 2D (116 aa).

A disordered region spans residues 1-116; it reads MSWRGRSTYR…PEEGEKQSQC (116 aa). Acidic residues-rich tracts occupy residues 31–44 and 86–95; these read FSDE…EEGE and ECEDGPDGQE. Positions 102–116 are enriched in basic and acidic residues; that stretch reads EEVKTPEEGEKQSQC.

This sequence belongs to the GAGE family. Not expressed in normal tissues, except in testis, but expressed by a large proportion of tumors of various histological origins.

The polypeptide is G antigen 2D (GAGE2D) (Homo sapiens (Human)).